A 619-amino-acid chain; its full sequence is Dihydroxy-acid dehydratase 1 (619 aa).

Position 81 (aspartate 81) interacts with Mg(2+). A [2Fe-2S] cluster-binding site is contributed by cysteine 122. Residues aspartate 123 and lysine 124 each contribute to the Mg(2+) site. At lysine 124 the chain carries N6-carboxylysine. Cysteine 198 serves as a coordination point for [2Fe-2S] cluster. Glutamate 494 contributes to the Mg(2+) binding site. The active-site Proton acceptor is the serine 520.

It belongs to the IlvD/Edd family. In terms of assembly, homodimer. The cofactor is [2Fe-2S] cluster. Requires Mg(2+) as cofactor.

It catalyses the reaction (2R)-2,3-dihydroxy-3-methylbutanoate = 3-methyl-2-oxobutanoate + H2O. The enzyme catalyses (2R,3R)-2,3-dihydroxy-3-methylpentanoate = (S)-3-methyl-2-oxopentanoate + H2O. It participates in amino-acid biosynthesis; L-isoleucine biosynthesis; L-isoleucine from 2-oxobutanoate: step 3/4. It functions in the pathway amino-acid biosynthesis; L-valine biosynthesis; L-valine from pyruvate: step 3/4. In terms of biological role, functions in the biosynthesis of branched-chain amino acids. Catalyzes the dehydration of (2R,3R)-2,3-dihydroxy-3-methylpentanoate (2,3-dihydroxy-3-methylvalerate) into 2-oxo-3-methylpentanoate (2-oxo-3-methylvalerate) and of (2R)-2,3-dihydroxy-3-methylbutanoate (2,3-dihydroxyisovalerate) into 2-oxo-3-methylbutanoate (2-oxoisovalerate), the penultimate precursor to L-isoleucine and L-valine, respectively. This chain is Dihydroxy-acid dehydratase 1, found in Bordetella bronchiseptica (strain ATCC BAA-588 / NCTC 13252 / RB50) (Alcaligenes bronchisepticus).